A 275-amino-acid chain; its full sequence is Adenylate kinase (275 aa).

54–59 contributes to the ATP binding site; that stretch reads GAGKGT. The interval 74-103 is NMP; it reads ATGDMLRSQVAKKTPLGREAKKIMDQGGLV. Residues Thr-75, Arg-80, 101 to 103, 130 to 133, and Gln-137 each bind AMP; these read GLV and GFPR. Residues 171–208 form an LID region; that stretch reads GRLVHPASGRSYHRVFNPPKADMKDDITGEPLVSRSDD. ATP contacts are provided by residues Arg-172 and 181–182; that span reads SY. AMP is bound by residues Arg-205 and Arg-216. Gln-244 contributes to the ATP binding site.

The protein belongs to the adenylate kinase family. AK2 subfamily. In terms of assembly, monomer.

Its subcellular location is the cytoplasm. The protein resides in the cytosol. It is found in the mitochondrion intermembrane space. It carries out the reaction AMP + ATP = 2 ADP. Catalyzes the reversible transfer of the terminal phosphate group between ATP and AMP. Plays an important role in cellular energy homeostasis and in adenine nucleotide metabolism. Adenylate kinase activity is critical for regulation of the phosphate utilization and the AMP de novo biosynthesis pathways. The protein is Adenylate kinase (adk1) of Botryotinia fuckeliana (strain B05.10) (Noble rot fungus).